We begin with the raw amino-acid sequence, 475 residues long: Pyruvate kinase (475 aa).

Arg-36 provides a ligand contact to substrate. Asn-38, Ser-40, and Asp-70 together coordinate K(+). An ATP-binding site is contributed by 38-41 (NFSH). ATP contacts are provided by Arg-77 and Lys-158. A Mg(2+)-binding site is contributed by Glu-223. Residues Gly-246, Asp-247, and Thr-279 each coordinate substrate. Asp-247 contacts Mg(2+).

The protein belongs to the pyruvate kinase family. Homotetramer. A divalent metal cation is required as a cofactor.

The catalysed reaction is pyruvate + ATP = phosphoenolpyruvate + ADP + H(+). It functions in the pathway carbohydrate degradation; glycolysis; pyruvate from D-glyceraldehyde 3-phosphate: step 5/5. This is Pyruvate kinase (pki) from Thermococcus litoralis (strain ATCC 51850 / DSM 5473 / JCM 8560 / NS-C).